The chain runs to 392 residues: Quinolinate synthase (392 aa).

The disordered stretch occupies residues methionine 1–leucine 23. Residues histidine 57 and serine 74 each coordinate iminosuccinate. Cysteine 131 contacts [4Fe-4S] cluster. Residues tyrosine 163–asparagine 165 and serine 184 contribute to the iminosuccinate site. Residue cysteine 254 participates in [4Fe-4S] cluster binding. Residues histidine 280 to glutamate 282 and threonine 297 each bind iminosuccinate. Residue cysteine 344 coordinates [4Fe-4S] cluster.

It belongs to the quinolinate synthase family. Type 3 subfamily. [4Fe-4S] cluster is required as a cofactor.

The protein localises to the cytoplasm. The catalysed reaction is iminosuccinate + dihydroxyacetone phosphate = quinolinate + phosphate + 2 H2O + H(+). The protein operates within cofactor biosynthesis; NAD(+) biosynthesis; quinolinate from iminoaspartate: step 1/1. Catalyzes the condensation of iminoaspartate with dihydroxyacetone phosphate to form quinolinate. The sequence is that of Quinolinate synthase from Rhodopirellula baltica (strain DSM 10527 / NCIMB 13988 / SH1).